Reading from the N-terminus, the 441-residue chain is Malate dehydrogenase [NADP], chloroplastic (441 aa).

Residues 1–51 constitute a chloroplast transit peptide; sequence MAVAELSPSYKTQLKTCQQLSSSLSTRLSDHRKFSLRLLPRPVSVRGGIRC. An intrachain disulfide couples Cys-75 to Cys-80. 104-110 contacts NADP(+); it reads GAAGMIS. Positions 185 and 191 each coordinate substrate. Asn-198 is a binding site for NADP(+). Gln-205 lines the NAD(+) pocket. 222 to 224 contacts NADP(+); sequence VGN. Residues Asn-224 and Arg-255 each coordinate substrate. The Proton acceptor role is filled by His-280. A disulfide bridge links Cys-416 with Cys-428.

This sequence belongs to the LDH/MDH superfamily. MDH type 2 family. As to quaternary structure, homodimer.

The protein localises to the plastid. Its subcellular location is the chloroplast. The catalysed reaction is (S)-malate + NADP(+) = oxaloacetate + NADPH + H(+). Its activity is regulated as follows. Chloroplast NADP-MDH is activated upon illumination. In order to be enzymatically active, disulfide bridges on the protein must be reduced by thioredoxin which receives electrons from ferredoxin and the electron transport system of photosynthesis. In terms of biological role, the chloroplastic, NADP-dependent form is essential for the photosynthesis C4 cycle, which allows plants to circumvent the problem of photorespiration. In C4 plants, NADP-MDH activity acts to convert oxaloacetate to malate in chloroplasts of mesophyll cells for transport to the bundle sheath cells. In Mesembryanthemum crystallinum (Common ice plant), this protein is Malate dehydrogenase [NADP], chloroplastic (MDH1).